Consider the following 295-residue polypeptide: MLEHLATEQRNEKTKHLDGMTTREILHVMNEEDRAAVIAVSKQLDCIEKIVHLVIAAFRRGGRLIYVGAGTSGRLGLLDAVECPPTFGTEPSMVQAILAGGLKAISEAVEGAEDDEEAAVRDLQAVGLTKNDVVIGIAASGRTPYVVSALRYAKQIGAATGSIACNKGAVISQYADAAVEIETGPEVLAGSTRLKAGTAQKMVLNMISTASMVGIGKVYGNWMVDVQATNEKLKERAKRILIEATGVSAEEASRYYEQAKGEVKTAIVMILRQCGYEEAKERLQQAEGFVRKALE.

The SIS domain maps to 54–217; sequence VIAAFRRGGR…STASMVGIGK (164 aa). Residue Glu82 is the Proton donor of the active site. The active site involves Glu113.

This sequence belongs to the GCKR-like family. MurNAc-6-P etherase subfamily. As to quaternary structure, homodimer.

The catalysed reaction is N-acetyl-D-muramate 6-phosphate + H2O = N-acetyl-D-glucosamine 6-phosphate + (R)-lactate. It functions in the pathway amino-sugar metabolism; N-acetylmuramate degradation. Its function is as follows. Specifically catalyzes the cleavage of the D-lactyl ether substituent of MurNAc 6-phosphate, producing GlcNAc 6-phosphate and D-lactate. The polypeptide is N-acetylmuramic acid 6-phosphate etherase (Geobacillus thermodenitrificans (strain NG80-2)).